A 320-amino-acid chain; its full sequence is Peroxidase 66 (320 aa).

The first 29 residues, 1 to 29, serve as a signal peptide directing secretion; that stretch reads MAASVSASCLNRLSSLAVVLVALASAASA. The residue at position 30 (Gln-30) is a Pyrrolidone carboxylic acid. 4 disulfide bridges follow: Cys-40–Cys-118, Cys-73–Cys-78, Cys-124–Cys-315, and Cys-202–Cys-227. His-71 serves as the catalytic Proton acceptor. Positions 72, 75, 77, 79, and 81 each coordinate Ca(2+). 2 N-linked (GlcNAc...) asparagine glycosylation sites follow: Asn-85 and Asn-96. A substrate-binding site is contributed by Pro-165. His-195 is a binding site for heme b. Thr-196 contacts Ca(2+). Asn-211 carries N-linked (GlcNAc...) asparagine glycosylation. Ca(2+)-binding residues include Asp-239, Thr-242, and Asp-247.

It belongs to the peroxidase family. Classical plant (class III) peroxidase subfamily. Heme b serves as cofactor. Requires Ca(2+) as cofactor.

Its subcellular location is the secreted. It carries out the reaction 2 a phenolic donor + H2O2 = 2 a phenolic radical donor + 2 H2O. Its function is as follows. Removal of H(2)O(2), oxidation of toxic reductants, biosynthesis and degradation of lignin, suberization, auxin catabolism, response to environmental stresses such as wounding, pathogen attack and oxidative stress. These functions might be dependent on each isozyme/isoform in each plant tissue. This is Peroxidase 66 (PER66) from Zea mays (Maize).